The primary structure comprises 585 residues: YTH domain-containing family protein 3 (585 aa).

3 disordered regions span residues 1–52 (MSAT…YPPM), 243–277 (RKPAKPQPKLKPKGNVGIGGSAVPPPPIKHNMNIG), and 304–351 (PQPL…QQLQ). N-acetylserine is present on Ser2. Over residues 15 to 24 (NKVSVQNGSI) the composition is skewed to polar residues. Ser23 carries the post-translational modification Phosphoserine. The span at 244-254 (KPAKPQPKLKP) shows a compositional bias: basic residues. The span at 329–351 (QQQQGPQPQAQPHQVQPQQQQLQ) shows a compositional bias: low complexity. In terms of domain architecture, YTH spans 416–550 (GRVFIIKSYS…EKAKQVLKII (135 aa)). RNA-binding positions include 422 to 424 (KSY), Asp428, 438 to 439 (WC), Asn468, Trp492, and Trp497.

This sequence belongs to the YTHDF family. YTHDF3 subfamily. In terms of assembly, interacts with CNOT1; promoting recruitment of the CCR4-NOT complex. Interacts with YTHDF1. Interacts with YTHDF2. Interacts with PAN3. (Microbial infection) Proteolytically cleaved by HIV-1 protease when incorporated into HIV-1 particles in a nucleocapsid-dependent-manner. Cleavage by HIV-1 protease probably ensures optimal infectivity of the mature virion.

It is found in the cytoplasm. It localises to the cytosol. The protein localises to the P-body. The protein resides in the stress granule. Functionally, specifically recognizes and binds N6-methyladenosine (m6A)-containing RNAs, and regulates their stability. M6A is a modification present at internal sites of mRNAs and some non-coding RNAs and plays a role in mRNA stability and processing. Acts as a regulator of mRNA stability by promoting degradation of m6A-containing mRNAs via interaction with the CCR4-NOT complex or PAN3. The YTHDF paralogs (YTHDF1, YTHDF2 and YTHDF3) share m6A-containing mRNAs targets and act redundantly to mediate mRNA degradation and cellular differentiation. Acts as a negative regulator of type I interferon response by down-regulating interferon-stimulated genes (ISGs) expression: acts by binding to FOXO3 mRNAs. Binds to FOXO3 mRNAs independently of METTL3-mediated m6A modification. Can also act as a regulator of mRNA stability in cooperation with YTHDF2 by binding to m6A-containing mRNA and promoting their degradation. Recognizes and binds m6A-containing circular RNAs (circRNAs); circRNAs are generated through back-splicing of pre-mRNAs, a non-canonical splicing process promoted by dsRNA structures across circularizing exons. Promotes formation of phase-separated membraneless compartments, such as P-bodies or stress granules, by undergoing liquid-liquid phase separation upon binding to mRNAs containing multiple m6A-modified residues: polymethylated mRNAs act as a multivalent scaffold for the binding of YTHDF proteins, juxtaposing their disordered regions and thereby leading to phase separation. The resulting mRNA-YTHDF complexes then partition into different endogenous phase-separated membraneless compartments, such as P-bodies, stress granules or neuronal RNA granules. May also recognize and bind N1-methyladenosine (m1A)-containing mRNAs: inhibits trophoblast invasion by binding to m1A-methylated transcripts of IGF1R, promoting their degradation. In terms of biological role, has some antiviral activity against HIV-1 virus: incorporated into HIV-1 particles in a nucleocapsid-dependent manner and reduces viral infectivity in the next cycle of infection. May interfere with this early step of the viral life cycle by binding to N6-methyladenosine (m6A) modified sites on the HIV-1 RNA genome. This is YTH domain-containing family protein 3 from Homo sapiens (Human).